A 27-amino-acid chain; its full sequence is Flagellar filament 34 kDa core protein (27 aa).

The protein belongs to the bacterial flagellin family. The flagellum consists of an outer layer composed of repeating units of FlaA around a core that contains one or all of five antigenically related polypeptides.

It is found in the periplasmic flagellum. The protein resides in the periplasm. Functionally, component of the core of the flagella. The protein is Flagellar filament 34 kDa core protein of Spirochaeta aurantia.